The primary structure comprises 186 residues: Lipid A acyltransferase PagP (186 aa).

An N-terminal signal peptide occupies residues 1–19; that stretch reads MKRLISCLTIICALNRSAA. Residues histidine 60, aspartate 103, and serine 104 contribute to the active site.

Belongs to the lipid A palmitoyltransferase family. In terms of assembly, homodimer.

Its subcellular location is the cell outer membrane. The enzyme catalyses a lipid A + a 1,2-diacyl-sn-glycero-3-phosphocholine = a hepta-acyl lipid A + a 2-acyl-sn-glycero-3-phosphocholine. It catalyses the reaction a lipid IVA + a 1,2-diacyl-sn-glycero-3-phosphocholine = a lipid IVB + a 2-acyl-sn-glycero-3-phosphocholine. The catalysed reaction is a lipid IIA + a 1,2-diacyl-sn-glycero-3-phosphocholine = a lipid IIB + a 2-acyl-sn-glycero-3-phosphocholine. Its function is as follows. Transfers a fatty acid residue from the sn-1 position of a phospholipid to the N-linked hydroxyfatty acid chain on the proximal unit of lipid A or its precursors. Confers resistance to cationic antimicrobial peptides (CAMPs). Promotes the ability of L.pneumophila to replicate and/or survive in macrophages. Important for ability to kill macrophages and to promote the virulence. This chain is Lipid A acyltransferase PagP, found in Legionella pneumophila.